Consider the following 258-residue polypeptide: Phosphate import ATP-binding protein PstB (258 aa).

Residues 13–253 (IKIENLNLWY…PREKSTEDYI (241 aa)) form the ABC transporter domain. Residue 45-52 (GPSGCGKS) coordinates ATP.

The protein belongs to the ABC transporter superfamily. Phosphate importer (TC 3.A.1.7) family. The complex is composed of two ATP-binding proteins (PstB), two transmembrane proteins (PstC and PstA) and a solute-binding protein (PstS).

It localises to the cell membrane. It carries out the reaction phosphate(out) + ATP + H2O = ADP + 2 phosphate(in) + H(+). Its function is as follows. Part of the ABC transporter complex PstSACB involved in phosphate import. Responsible for energy coupling to the transport system. The polypeptide is Phosphate import ATP-binding protein PstB (Methanosarcina barkeri (strain Fusaro / DSM 804)).